A 394-amino-acid polypeptide reads, in one-letter code: Elongation factor Tu 2 (394 aa).

One can recognise a tr-type G domain in the interval 10-204 (KPHVNVGTIG…ALDTYIPEPE (195 aa)). Residues 19–26 (GHVDHGKT) form a G1 region. 19–26 (GHVDHGKT) serves as a coordination point for GTP. Thr26 serves as a coordination point for Mg(2+). Residues 60–64 (GITIS) are G2. Positions 81–84 (DCPG) are G3. Residues 81-85 (DCPGH) and 136-139 (NKCD) each bind GTP. Residues 136–139 (NKCD) are G4. Positions 174-176 (SAL) are G5.

This sequence belongs to the TRAFAC class translation factor GTPase superfamily. Classic translation factor GTPase family. EF-Tu/EF-1A subfamily. Monomer.

The protein localises to the cytoplasm. The catalysed reaction is GTP + H2O = GDP + phosphate + H(+). In terms of biological role, GTP hydrolase that promotes the GTP-dependent binding of aminoacyl-tRNA to the A-site of ribosomes during protein biosynthesis. The polypeptide is Elongation factor Tu 2 (Vibrio vulnificus (strain CMCP6)).